Reading from the N-terminus, the 377-residue chain is 8-amino-7-oxononanoate synthase (377 aa).

Arg13 provides a ligand contact to substrate. Residue 100 to 101 (GY) participates in pyridoxal 5'-phosphate binding. Substrate is bound at residue His125. 3 residues coordinate pyridoxal 5'-phosphate: Ser171, His199, and Thr228. Residue Lys231 is modified to N6-(pyridoxal phosphate)lysine. Position 345 (Thr345) interacts with substrate.

The protein belongs to the class-II pyridoxal-phosphate-dependent aminotransferase family. BioF subfamily. In terms of assembly, homodimer. Pyridoxal 5'-phosphate is required as a cofactor.

It catalyses the reaction 6-carboxyhexanoyl-[ACP] + L-alanine + H(+) = (8S)-8-amino-7-oxononanoate + holo-[ACP] + CO2. The protein operates within cofactor biosynthesis; biotin biosynthesis. Catalyzes the decarboxylative condensation of pimeloyl-[acyl-carrier protein] and L-alanine to produce 8-amino-7-oxononanoate (AON), [acyl-carrier protein], and carbon dioxide. In Nitrosococcus oceani (strain ATCC 19707 / BCRC 17464 / JCM 30415 / NCIMB 11848 / C-107), this protein is 8-amino-7-oxononanoate synthase.